A 150-amino-acid polypeptide reads, in one-letter code: Ribosomal RNA large subunit methyltransferase H (150 aa).

S-adenosyl-L-methionine is bound by residues alanine 100 and leucine 118 to phenylalanine 123.

It belongs to the RNA methyltransferase RlmH family. In terms of assembly, homodimer.

It is found in the cytoplasm. The enzyme catalyses pseudouridine(1915) in 23S rRNA + S-adenosyl-L-methionine = N(3)-methylpseudouridine(1915) in 23S rRNA + S-adenosyl-L-homocysteine + H(+). Its function is as follows. Specifically methylates the pseudouridine at position 1915 (m3Psi1915) in 23S rRNA. This chain is Ribosomal RNA large subunit methyltransferase H, found in Helicobacter pylori (strain Shi470).